Consider the following 322-residue polypeptide: NADH-quinone oxidoreductase subunit H (322 aa).

8 consecutive transmembrane segments (helical) span residues 15-35 (IFQS…MSVV), 81-101 (ITFL…ITII), 114-134 (IGVL…LLAG), 149-169 (ATAQ…GVVA), 184-204 (IGLW…IAGL), 237-257 (FFIG…TMFF), 265-285 (FPSY…FILI), and 299-319 (LFGW…TALI).

Belongs to the complex I subunit 1 family. NDH-1 is composed of 13 different subunits. Subunits NuoA, H, J, K, L, M, N constitute the membrane sector of the complex.

The protein localises to the cell membrane. It carries out the reaction a quinone + NADH + 5 H(+)(in) = a quinol + NAD(+) + 4 H(+)(out). In terms of biological role, NDH-1 shuttles electrons from NADH, via FMN and iron-sulfur (Fe-S) centers, to quinones in the respiratory chain. The immediate electron acceptor for the enzyme in this species is believed to be ubiquinone. Couples the redox reaction to proton translocation (for every two electrons transferred, four hydrogen ions are translocated across the cytoplasmic membrane), and thus conserves the redox energy in a proton gradient. This subunit may bind ubiquinone. In Buchnera aphidicola subsp. Baizongia pistaciae (strain Bp), this protein is NADH-quinone oxidoreductase subunit H.